The chain runs to 593 residues: UvrABC system protein C (593 aa).

The 78-residue stretch at 17-94 folds into the GIY-YIG domain; sequence MEPGCYLMKD…IKQYQPRYNI (78 aa). Positions 199-234 constitute a UVR domain; that stretch reads KTILKSLEERMLTASESLDFERAKEYRDLIQHIQNL.

The protein belongs to the UvrC family. Interacts with UvrB in an incision complex.

The protein localises to the cytoplasm. In terms of biological role, the UvrABC repair system catalyzes the recognition and processing of DNA lesions. UvrC both incises the 5' and 3' sides of the lesion. The N-terminal half is responsible for the 3' incision and the C-terminal half is responsible for the 5' incision. The sequence is that of UvrABC system protein C from Staphylococcus aureus (strain Mu3 / ATCC 700698).